We begin with the raw amino-acid sequence, 301 residues long: Large ribosomal subunit protein uL18 (301 aa).

Residues 257–271 (NPERVKSTKKNDKPK) show a composition bias toward basic and acidic residues. A disordered region spans residues 257 to 283 (NPERVKSTKKNDKPKRDHKKFYPTKLT).

It belongs to the universal ribosomal protein uL18 family. In terms of assembly, component of the large ribosomal subunit (LSU).

The protein localises to the cytoplasm. It is found in the nucleus. In terms of biological role, component of the ribosome, a large ribonucleoprotein complex responsible for the synthesis of proteins in the cell. The small ribosomal subunit (SSU) binds messenger RNAs (mRNAs) and translates the encoded message by selecting cognate aminoacyl-transfer RNA (tRNA) molecules. The large subunit (LSU) contains the ribosomal catalytic site termed the peptidyl transferase center (PTC), which catalyzes the formation of peptide bonds, thereby polymerizing the amino acids delivered by tRNAs into a polypeptide chain. The nascent polypeptides leave the ribosome through a tunnel in the LSU and interact with protein factors that function in enzymatic processing, targeting, and the membrane insertion of nascent chains at the exit of the ribosomal tunnel. In Tetrahymena thermophila (strain SB210), this protein is Large ribosomal subunit protein uL18 (RPL5).